The primary structure comprises 205 residues: N-(5'-phosphoribosyl)anthranilate isomerase (205 aa).

The protein belongs to the TrpF family.

It catalyses the reaction N-(5-phospho-beta-D-ribosyl)anthranilate = 1-(2-carboxyphenylamino)-1-deoxy-D-ribulose 5-phosphate. Its pathway is amino-acid biosynthesis; L-tryptophan biosynthesis; L-tryptophan from chorismate: step 3/5. This Thermotoga petrophila (strain ATCC BAA-488 / DSM 13995 / JCM 10881 / RKU-1) protein is N-(5'-phosphoribosyl)anthranilate isomerase.